The sequence spans 189 residues: Putative 3-methyladenine DNA glycosylase (189 aa).

This sequence belongs to the DNA glycosylase MPG family.

The polypeptide is Putative 3-methyladenine DNA glycosylase (mag) (Corynebacterium glutamicum (strain ATCC 13032 / DSM 20300 / JCM 1318 / BCRC 11384 / CCUG 27702 / LMG 3730 / NBRC 12168 / NCIMB 10025 / NRRL B-2784 / 534)).